The sequence spans 508 residues: Polyamine oxidase FMS1 (508 aa).

It belongs to the flavin monoamine oxidase family. It depends on FAD as a cofactor.

It catalyses the reaction spermine + O2 + H2O = 3-aminopropanal + spermidine + H2O2. It carries out the reaction spermidine + O2 + H2O = 3-aminopropanal + putrescine + H2O2. The enzyme catalyses N(1)-acetylspermine + O2 + H2O = 3-acetamidopropanal + spermidine + H2O2. The catalysed reaction is N(1)-acetylspermidine + O2 + H2O = 3-acetamidopropanal + putrescine + H2O2. It catalyses the reaction N(8)-acetylspermidine + O2 + H2O = 4-acetamidobutanal + propane-1,3-diamine + H2O2. Functionally, involved in the production of beta-alanine, a precursor of pantothenic acid. Multicopy suppressor of fenpropimorph resistance. This Saccharomyces cerevisiae (strain ATCC 204508 / S288c) (Baker's yeast) protein is Polyamine oxidase FMS1 (FMS1).